We begin with the raw amino-acid sequence, 288 residues long: Quinate/shikimate dehydrogenase (288 aa).

Residues Lys-71 and Asp-107 each contribute to the substrate site. NAD(+) is bound by residues 132–135, 155–158, Lys-205, 232–235, and Gly-255; these read AGGA, NRRD, and CVYN.

The protein belongs to the shikimate dehydrogenase family. As to quaternary structure, homodimer.

The catalysed reaction is L-quinate + NAD(+) = 3-dehydroquinate + NADH + H(+). The enzyme catalyses L-quinate + NADP(+) = 3-dehydroquinate + NADPH + H(+). It catalyses the reaction shikimate + NADP(+) = 3-dehydroshikimate + NADPH + H(+). It carries out the reaction shikimate + NAD(+) = 3-dehydroshikimate + NADH + H(+). The protein operates within metabolic intermediate biosynthesis; chorismate biosynthesis; chorismate from D-erythrose 4-phosphate and phosphoenolpyruvate: step 4/7. In terms of biological role, the actual biological function of YdiB remains unclear, nor is it known whether 3-dehydroshikimate or quinate represents the natural substrate. Catalyzes the reversible NAD-dependent reduction of both 3-dehydroshikimate (DHSA) and 3-dehydroquinate to yield shikimate (SA) and quinate, respectively. It can use both NAD or NADP for catalysis, however it has higher catalytic efficiency with NAD. In Escherichia coli O157:H7, this protein is Quinate/shikimate dehydrogenase.